We begin with the raw amino-acid sequence, 575 residues long: UvrABC system protein C (575 aa).

The 79-residue stretch at Ser16–Val94 folds into the GIY-YIG domain. The region spanning Asp204–Val239 is the UVR domain.

It belongs to the UvrC family. In terms of assembly, interacts with UvrB in an incision complex.

It is found in the cytoplasm. In terms of biological role, the UvrABC repair system catalyzes the recognition and processing of DNA lesions. UvrC both incises the 5' and 3' sides of the lesion. The N-terminal half is responsible for the 3' incision and the C-terminal half is responsible for the 5' incision. This Shigella dysenteriae serotype 1 (strain Sd197) protein is UvrABC system protein C.